A 336-amino-acid polypeptide reads, in one-letter code: MAIKVAINGFGRIGRLAFRRIQDVEGLEVVAVNDLTDDDMLAHLLKYDTMQGRFTGEVEVIEGGFRVNGKEIKSFDEPDAGKLPWGDLDIDVVLECTGFYTDKEKAQAHIDAGAKKVLISAPAKGDVKTIVFNTNHDTLDGSETVVSGASCTTNSLAPVAKVLSDEFGLVEGFMTTIHAYTGDQNTQDAPHRKGDKRRARAAAENIIPNSTGAAKAIGKVIPEIDGKLDGGAQRVPVATGSLTELTVVLDKQDVTVDQVNSAMKQASDESFGYTEDEIVSSDIVGMTYGSLFDATQTRVMTVGDRQLVKVAAWYDNEMSYTAQLVRTLAHLAELSK.

Residues 12-13, Asp34, and Ser120 contribute to the NAD(+) site; that span reads RI. D-glyceraldehyde 3-phosphate-binding positions include 150–152, Thr181, Arg198, 211–212, and Arg234; these read SCT and TG. Cys151 functions as the Nucleophile in the catalytic mechanism. Position 316 (Asn316) interacts with NAD(+).

Belongs to the glyceraldehyde-3-phosphate dehydrogenase family. In terms of assembly, homotetramer.

The protein localises to the cytoplasm. It catalyses the reaction D-glyceraldehyde 3-phosphate + phosphate + NAD(+) = (2R)-3-phospho-glyceroyl phosphate + NADH + H(+). The protein operates within carbohydrate degradation; glycolysis; pyruvate from D-glyceraldehyde 3-phosphate: step 1/5. Catalyzes the oxidative phosphorylation of glyceraldehyde 3-phosphate (G3P) to 1,3-bisphosphoglycerate (BPG) using the cofactor NAD. The first reaction step involves the formation of a hemiacetal intermediate between G3P and a cysteine residue, and this hemiacetal intermediate is then oxidized to a thioester, with concomitant reduction of NAD to NADH. The reduced NADH is then exchanged with the second NAD, and the thioester is attacked by a nucleophilic inorganic phosphate to produce BPG. This chain is Glyceraldehyde-3-phosphate dehydrogenase 1 (gapA1), found in Staphylococcus epidermidis (strain ATCC 35984 / DSM 28319 / BCRC 17069 / CCUG 31568 / BM 3577 / RP62A).